Reading from the N-terminus, the 293-residue chain is Pyridoxal 5'-phosphate synthase subunit PdxS (293 aa).

Aspartate 25 serves as a coordination point for D-ribose 5-phosphate. The active-site Schiff-base intermediate with D-ribose 5-phosphate is the lysine 82. Glycine 154 contacts D-ribose 5-phosphate. Residue arginine 166 coordinates D-glyceraldehyde 3-phosphate. Residues glycine 215 and 236–237 (GS) contribute to the D-ribose 5-phosphate site.

The protein belongs to the PdxS/SNZ family. In the presence of PdxT, forms a dodecamer of heterodimers.

It carries out the reaction aldehydo-D-ribose 5-phosphate + D-glyceraldehyde 3-phosphate + L-glutamine = pyridoxal 5'-phosphate + L-glutamate + phosphate + 3 H2O + H(+). Its pathway is cofactor biosynthesis; pyridoxal 5'-phosphate biosynthesis. Its function is as follows. Catalyzes the formation of pyridoxal 5'-phosphate from ribose 5-phosphate (RBP), glyceraldehyde 3-phosphate (G3P) and ammonia. The ammonia is provided by the PdxT subunit. Can also use ribulose 5-phosphate and dihydroxyacetone phosphate as substrates, resulting from enzyme-catalyzed isomerization of RBP and G3P, respectively. This chain is Pyridoxal 5'-phosphate synthase subunit PdxS, found in Thermotoga petrophila (strain ATCC BAA-488 / DSM 13995 / JCM 10881 / RKU-1).